Reading from the N-terminus, the 867-residue chain is Transcription factor E2F8 (867 aa).

A disordered region spans residues 38–58 (DFGPLTTPTKPKEGSQGEPWT). A phosphoserine mark is found at Ser71 and Ser102. DNA-binding regions lie at residues 113–182 (RKEK…TWHG) and 261–347 (RKDK…KWTG). 3 disordered regions span residues 408 to 432 (RRKINSAPSSPIKTNKAESSQNSAP), 532 to 616 (QSVT…SGSK), and 771 to 800 (APENAGTQQGRATNYDSPVPGQSQPNGQSV). 2 positions are modified to phosphoserine: Ser413 and Ser417. 2 stretches are compositionally biased toward polar residues: residues 413–432 (SAPSSPIKTNKAESSQNSAP) and 532–556 (QSVTPPQGLSPTVCTTHSSKATGSK). Over residues 557–567 (DSTDATTEKAA) the composition is skewed to basic and acidic residues. A compositionally biased stretch (polar residues) spans 568–579 (NDTSKASASTRP). A compositionally biased stretch (basic and acidic residues) spans 594–604 (RTREPAGERGS). Over residues 775-800 (AGTQQGRATNYDSPVPGQSQPNGQSV) the composition is skewed to polar residues.

This sequence belongs to the E2F/DP family. In terms of assembly, homodimer and heterodimer: mainly forms homodimers and, to a lesser extent, heterodimers with E2F8. Dimerization is important for DNA-binding. Interacts with HIF1A.

The protein localises to the nucleus. Its function is as follows. Atypical E2F transcription factor that participates in various processes such as angiogenesis and polyploidization of specialized cells. Mainly acts as a transcription repressor that binds DNA independently of DP proteins and specifically recognizes the E2 recognition site 5'-TTTC[CG]CGC-3'. Directly represses transcription of classical E2F transcription factors such as E2F1: component of a feedback loop in S phase by repressing the expression of E2F1, thereby preventing p53/TP53-dependent apoptosis. Plays a key role in polyploidization of cells in placenta and liver by regulating the endocycle, probably by repressing genes promoting cytokinesis and antagonizing action of classical E2F proteins (E2F1, E2F2 and/or E2F3). Required for placental development by promoting polyploidization of trophoblast giant cells. Acts as a promoter of sprouting angiogenesis, possibly by acting as a transcription activator: associates with HIF1A, recognizes and binds the VEGFA promoter, which is different from canonical E2 recognition site, and activates expression of the VEGFA gene. The protein is Transcription factor E2F8 (E2F8) of Homo sapiens (Human).